The sequence spans 175 residues: Electron transport protein HydN (175 aa).

4 consecutive 4Fe-4S ferredoxin-type domains span residues asparagine 2–cysteine 32, lysine 48–lysine 79, glycine 80–arginine 109, and aspartate 124–arginine 157. 16 residues coordinate [4Fe-4S] cluster: cysteine 12, cysteine 15, cysteine 18, cysteine 22, cysteine 58, cysteine 61, cysteine 66, cysteine 70, cysteine 89, cysteine 92, cysteine 95, cysteine 99, cysteine 131, cysteine 134, cysteine 143, and cysteine 147.

[4Fe-4S] cluster is required as a cofactor.

Functionally, electron transport from formate to hydrogen. The chain is Electron transport protein HydN (hydN) from Escherichia coli O157:H7.